The primary structure comprises 177 residues: Putative pre-16S rRNA nuclease (177 aa).

The segment at Met-1–Arg-20 is disordered.

The protein belongs to the YqgF nuclease family.

It localises to the cytoplasm. Could be a nuclease involved in processing of the 5'-end of pre-16S rRNA. This chain is Putative pre-16S rRNA nuclease, found in Rhodococcus erythropolis (strain PR4 / NBRC 100887).